A 288-amino-acid chain; its full sequence is ATP synthase gamma chain (288 aa).

Belongs to the ATPase gamma chain family. F-type ATPases have 2 components, CF(1) - the catalytic core - and CF(0) - the membrane proton channel. CF(1) has five subunits: alpha(3), beta(3), gamma(1), delta(1), epsilon(1). CF(0) has three main subunits: a, b and c.

Its subcellular location is the cell inner membrane. Produces ATP from ADP in the presence of a proton gradient across the membrane. The gamma chain is believed to be important in regulating ATPase activity and the flow of protons through the CF(0) complex. This chain is ATP synthase gamma chain, found in Polaromonas sp. (strain JS666 / ATCC BAA-500).